The sequence spans 1055 residues: Endo-1,4-beta-xylanase A (1055 aa).

The N-terminal stretch at 1–29 (MRKKRRGFLNASTAVLVGILAGFLGVVLA) is a signal peptide. Positions 30–357 (ATGALGFAVR…TTSAEIKLEM (328 aa)) are a. A GH10 domain is found at 360–688 (EEEIPALKDV…KLAYWAIVAP (329 aa)). Glutamate 498 serves as the catalytic Proton donor. Glutamate 604 serves as the catalytic Nucleophile. CBM-cenC domains lie at 720–851 (PIEI…TNSQ) and 895–1040 (KSVA…PTNN).

This sequence belongs to the glycosyl hydrolase 10 (cellulase F) family.

It catalyses the reaction Endohydrolysis of (1-&gt;4)-beta-D-xylosidic linkages in xylans.. The sequence is that of Endo-1,4-beta-xylanase A (xynA) from Thermotoga neapolitana.